The chain runs to 176 residues: Ribosome rescue factor SmrB (176 aa).

Positions 98-173 (LDVHGLNQDQ…RSTAILFLIH (76 aa)) constitute a Smr domain.

The protein belongs to the SmrB family. In terms of assembly, associates with collided ribosomes, but not with correctly translating polysomes.

In terms of biological role, acts as a ribosome collision sensor. Detects stalled/collided disomes (pairs of ribosomes where the leading ribosome is stalled and a second ribosome has collided with it) and endonucleolytically cleaves mRNA at the 5' boundary of the stalled ribosome. Stalled/collided disomes form a new interface (primarily via the 30S subunits) that binds SmrB. Cleaved mRNA becomes available for tmRNA ligation, leading to ribosomal subunit dissociation and rescue of stalled ribosomes. This Buchnera aphidicola subsp. Baizongia pistaciae (strain Bp) protein is Ribosome rescue factor SmrB.